The following is a 216-amino-acid chain: Probable flavin-dependent thymidylate synthase (216 aa).

The 216-residue stretch at 1–216 (MSAKLISVTK…PSIAKALDWV (216 aa)) folds into the ThyX domain. Residues Ser55, 78-80 (RHR), and Glu86 each bind FAD. Residues 75-78 (QVLR), 86-90 (EFSQR), and Arg155 contribute to the dUMP site. A ThyX motif motif is present at residues 78–88 (RHRSFHFQEFS). His177 lines the FAD pocket. Position 182 (Arg182) interacts with dUMP. Arg182 acts as the Involved in ionization of N3 of dUMP, leading to its activation in catalysis.

The protein belongs to the thymidylate synthase ThyX family. In terms of assembly, homotetramer. The cofactor is FAD.

The catalysed reaction is dUMP + (6R)-5,10-methylene-5,6,7,8-tetrahydrofolate + NADPH + H(+) = dTMP + (6S)-5,6,7,8-tetrahydrofolate + NADP(+). It participates in pyrimidine metabolism; dTTP biosynthesis. In terms of biological role, catalyzes the reductive methylation of 2'-deoxyuridine-5'-monophosphate (dUMP) to 2'-deoxythymidine-5'-monophosphate (dTMP) while utilizing 5,10-methylenetetrahydrofolate (mTHF) as the methyl donor, and NADPH and FADH(2) as the reductant. The protein is Probable flavin-dependent thymidylate synthase of Paramecium bursaria Chlorella virus 1 (PBCV-1).